Consider the following 262-residue polypeptide: Octopine permease ATP-binding protein P (262 aa).

The ABC transporter domain maps to V9–L254. G41 to S48 is an ATP binding site.

It belongs to the ABC transporter superfamily.

The protein resides in the cell inner membrane. Functionally, component of the octopine active transport system probably consisting of four subunits: Q, M, P and T. The sequence is that of Octopine permease ATP-binding protein P (occP) from Rhizobium radiobacter (Agrobacterium tumefaciens).